A 591-amino-acid chain; its full sequence is Phosphoglucan phosphatase LSF1, chloroplastic (591 aa).

A chloroplast-targeting transit peptide spans 1–61 (MAFLQQISGL…RRRRVVLRVV (61 aa)). The 163-residue stretch at 291-453 (RYSKITEQIY…VDDGKHDGTP (163 aa)) folds into the Tyrosine-protein phosphatase domain. Cys390 serves as the catalytic Phosphocysteine intermediate. 390–396 (CTTGFDR) contacts substrate.

It is found in the plastid. It localises to the chloroplast. Starch granule-associated phosphoglucan phosphatase involved in the control of starch accumulation. Participates in the regulation of the initial steps of starch degradation at the granule surface. May release a different set of phosphate groups from those removed by DSP4. The chain is Phosphoglucan phosphatase LSF1, chloroplastic (LSF1) from Arabidopsis thaliana (Mouse-ear cress).